The chain runs to 237 residues: Lectin alpha chain (237 aa).

Mn(2+)-binding residues include Glu-8 and Asp-10. Residues Asp-10, Tyr-12, Asn-14, and Asp-19 each coordinate Ca(2+). Tyr-12 is an a carbohydrate binding site. Residues Asp-19 and His-24 each contribute to the Mn(2+) site. Position 99–100 (99–100) interacts with a carbohydrate; it reads LY. Asp-208 contributes to the Ca(2+) binding site. Residue Arg-228 participates in a carbohydrate binding.

This sequence belongs to the leguminous lectin family. As to quaternary structure, homotetramer. The beta and gamma chains are produced by partial proteolytic processing of the lectin alpha chain by an asparaginyl endopeptidase.

It localises to the vacuole. The protein localises to the aleurone grain. Its function is as follows. D-mannose/D-glucose-binding lectin with hemagglutinating activity towards rabbit and human erythrocytes. In rats, elicits an acute inflammatory response by inducing neutrophil migration and induces dose-dependent paw edema. This is Lectin alpha chain from Macropsychanthus wilsonii (Wilson's clusterpea).